A 137-amino-acid polypeptide reads, in one-letter code: NADH-quinone oxidoreductase subunit A (137 aa).

A run of 3 helical transmembrane segments spans residues 12–32 (WGFA…LGVS), 66–86 (FYLV…LFAW), and 96–116 (TGFV…VYLF).

Belongs to the complex I subunit 3 family. As to quaternary structure, NDH-1 is composed of 13 different subunits. Subunits NuoA, H, J, K, L, M, N constitute the membrane sector of the complex.

It localises to the cell inner membrane. It catalyses the reaction a quinone + NADH + 5 H(+)(in) = a quinol + NAD(+) + 4 H(+)(out). Functionally, NDH-1 shuttles electrons from NADH, via FMN and iron-sulfur (Fe-S) centers, to quinones in the respiratory chain. The immediate electron acceptor for the enzyme in this species is believed to be ubiquinone. Couples the redox reaction to proton translocation (for every two electrons transferred, four hydrogen ions are translocated across the cytoplasmic membrane), and thus conserves the redox energy in a proton gradient. The sequence is that of NADH-quinone oxidoreductase subunit A from Pseudomonas fluorescens (strain Pf0-1).